We begin with the raw amino-acid sequence, 841 residues long: Potassium transport protein 1 (841 aa).

A run of 2 helical transmembrane segments spans residues 24–44 and 80–100; these read YIYIISLTIIASILLFTGGTT and ILYGFTAITVPIWMHGSISFI. Residues asparagine 116 and asparagine 164 are each glycosylated (N-linked (GlcNAc...) asparagine). The segment at 173 to 192 is disordered; that stretch reads STNNPYFPDNPPSPKADISK. Residues asparagine 215 and asparagine 401 are each glycosylated (N-linked (GlcNAc...) asparagine). 7 helical membrane passes run 469–489, 507–527, 537–557, 600–620, 662–682, 715–735, and 747–767; these read MVTLYFIIFNIAAFVTFIVFA, GWWALFSSASSFNDLGFSLIP, IFLLLISSLFIIAGNTGFPCF, WVLFFVLLLLNVIDLVLFMVL, AVLVSYMVMMYISVYPVAINM, LSYDLWYIFLGLFIICICEGG, and IFTVLFEVVSAYGTVGLSTGL. Residue asparagine 771 is glycosylated (N-linked (GlcNAc...) asparagine).

Belongs to the TrkH potassium transport family.

Its subcellular location is the cell membrane. Functionally, together with TRK2, defines the major, high-affinity potassium influx transport system. Involved in maintenance of the proper sodium/potassium ratio in the cell and in regulating the plasma membrane potential. The protein is Potassium transport protein 1 (trk1) of Schizosaccharomyces pombe (strain 972 / ATCC 24843) (Fission yeast).